The primary structure comprises 219 residues: UPF0173 metal-dependent hydrolase Mhun_1705 (219 aa).

It belongs to the UPF0173 family.

The chain is UPF0173 metal-dependent hydrolase Mhun_1705 from Methanospirillum hungatei JF-1 (strain ATCC 27890 / DSM 864 / NBRC 100397 / JF-1).